A 312-amino-acid chain; its full sequence is Ribosomal protein L11 methyltransferase (312 aa).

Residues Thr162, Gly183, Asp205, and Asn248 each coordinate S-adenosyl-L-methionine.

This sequence belongs to the methyltransferase superfamily. PrmA family.

The protein resides in the cytoplasm. It carries out the reaction L-lysyl-[protein] + 3 S-adenosyl-L-methionine = N(6),N(6),N(6)-trimethyl-L-lysyl-[protein] + 3 S-adenosyl-L-homocysteine + 3 H(+). Methylates ribosomal protein L11. This Bacillus cereus (strain Q1) protein is Ribosomal protein L11 methyltransferase.